A 301-amino-acid chain; its full sequence is Protoheme IX farnesyltransferase (301 aa).

The next 9 helical transmembrane spans lie at 16-36, 41-61, 93-113, 114-134, 141-161, 172-192, 217-237, 238-258, and 273-293; these read VVAL…PGMP, IQSG…AAAI, VFAG…VNLI, TAVL…VYLK, IVIG…AVTG, SLLV…LAIF, QILL…ATGM, SGVF…WYAW, and FGYS…DHWL.

This sequence belongs to the UbiA prenyltransferase family. Protoheme IX farnesyltransferase subfamily.

It is found in the cell inner membrane. It catalyses the reaction heme b + (2E,6E)-farnesyl diphosphate + H2O = Fe(II)-heme o + diphosphate. It participates in porphyrin-containing compound metabolism; heme O biosynthesis; heme O from protoheme: step 1/1. Its function is as follows. Converts heme B (protoheme IX) to heme O by substitution of the vinyl group on carbon 2 of heme B porphyrin ring with a hydroxyethyl farnesyl side group. This chain is Protoheme IX farnesyltransferase, found in Xylella fastidiosa (strain Temecula1 / ATCC 700964).